Here is a 382-residue protein sequence, read N- to C-terminus: Na(+)/H(+) antiporter NhaA 2 (382 aa).

A run of 11 helical transmembrane segments spans residues 7–27, 58–78, 94–114, 124–144, 153–173, 178–198, 199–219, 255–275, 291–311, 327–347, and 361–381; these read MVLS…LALL, LDLW…GLEL, SLPI…FAAI, GWAI…MLLG, LFLL…IALF, LSAL…LLNY, YHIT…IAML, NPWV…GIDI, IILG…FIAI, FYGI…IDGL, and LAIL…LKIV.

It belongs to the NhaA Na(+)/H(+) (TC 2.A.33) antiporter family.

The protein localises to the cell inner membrane. It carries out the reaction Na(+)(in) + 2 H(+)(out) = Na(+)(out) + 2 H(+)(in). Its function is as follows. Na(+)/H(+) antiporter that extrudes sodium in exchange for external protons. In Campylobacter jejuni subsp. jejuni serotype O:6 (strain 81116 / NCTC 11828), this protein is Na(+)/H(+) antiporter NhaA 2.